Consider the following 756-residue polypeptide: Subtilisin-like protease SBT3.9 (756 aa).

Positions 1-25 (MSKTILFLALFLSIVLNVQISFVVA) are cleaved as a signal peptide. The propeptide at 26-108 (ESKVYVVYLG…VIPNTLYEMT (83 aa)) is activation peptide. The Inhibitor I9 domain maps to 29 to 106 (VYVVYLGEKE…VQVIPNTLYE (78 aa)). A Peptidase S8 domain is found at 112-603 (TWDYLGVSPG…GGLINPEKAV (492 aa)). Asp-142 functions as the Charge relay system in the catalytic mechanism. N-linked (GlcNAc...) asparagine glycosylation is found at Asn-175 and Asn-202. His-218 (charge relay system) is an active-site residue. Asn-233, Asn-357, Asn-395, and Asn-519 each carry an N-linked (GlcNAc...) asparagine glycan. The 75-residue stretch at 386–460 (DCEKLSANPN…ELGTDILFYI (75 aa)) folds into the PA domain. Residue Ser-534 is the Charge relay system of the active site.

It belongs to the peptidase S8 family.

It is found in the secreted. The chain is Subtilisin-like protease SBT3.9 from Arabidopsis thaliana (Mouse-ear cress).